The following is a 112-amino-acid chain: Nitrogen regulatory protein P-II (112 aa).

Residue tyrosine 51 is modified to O-UMP-tyrosine.

This sequence belongs to the P(II) protein family. As to quaternary structure, homotrimer.

In nitrogen-limiting conditions, when the ratio of Gln to 2-ketoglutarate decreases, P-II is uridylylated to P-II-UMP. P-II-UMP allows the deadenylation of glutamine synthetase (GS), thus activating the enzyme. Conversely, in nitrogen excess P-II is deuridylated and promotes the adenylation of GS. P-II indirectly controls the transcription of the GS gene (glnA). P-II prevents NR-II-catalyzed conversion of NR-I to NR-I-phosphate, the transcriptional activator of glnA. When P-II is uridylylated to P-II-UMP, these events are reversed. The protein is Nitrogen regulatory protein P-II (glnB) of Mesorhizobium japonicum (strain LMG 29417 / CECT 9101 / MAFF 303099) (Mesorhizobium loti (strain MAFF 303099)).